The primary structure comprises 430 residues: Enolase (430 aa).

A (2R)-2-phosphoglycerate-binding site is contributed by glutamine 163. Glutamate 205 serves as the catalytic Proton donor. Positions 242, 286, and 313 each coordinate Mg(2+). (2R)-2-phosphoglycerate-binding residues include lysine 338, arginine 367, serine 368, and lysine 389. Catalysis depends on lysine 338, which acts as the Proton acceptor.

It belongs to the enolase family. Mg(2+) is required as a cofactor.

The protein resides in the cytoplasm. It is found in the secreted. Its subcellular location is the cell surface. It carries out the reaction (2R)-2-phosphoglycerate = phosphoenolpyruvate + H2O. It participates in carbohydrate degradation; glycolysis; pyruvate from D-glyceraldehyde 3-phosphate: step 4/5. In terms of biological role, catalyzes the reversible conversion of 2-phosphoglycerate (2-PG) into phosphoenolpyruvate (PEP). It is essential for the degradation of carbohydrates via glycolysis. This is Enolase from Symbiobacterium thermophilum (strain DSM 24528 / JCM 14929 / IAM 14863 / T).